We begin with the raw amino-acid sequence, 587 residues long: Protein SIX6OS1 (587 aa).

The interval Thr356–Asp378 is disordered. Residues Pro357–Ser367 are compositionally biased toward polar residues. Basic and acidic residues predominate over residues Glu368–Asp378. Ser439 carries the post-translational modification Phosphoserine. The tract at residues Ser568 to Phe587 is disordered.

In terms of assembly, interacts with SYCE1. Interacts with proteasome subunit PSMA8; to participate in meiosis progression during spermatogenesis. Highest expression in retina, skeletal muscle, testis and colon.

It is found in the chromosome. Its function is as follows. Meiotic protein that localizes to the central element of the synaptonemal complex and is required for chromosome synapsis during meiotic recombination. Required for the appropriate processing of intermediate recombination nodules before crossover formation. The chain is Protein SIX6OS1 from Homo sapiens (Human).